Consider the following 200-residue polypeptide: Holliday junction resolvase RecU (200 aa).

The disordered stretch occupies residues 1-25; it reads MTIRYPNGKRYNQASQPQKTPIKTH. Over residues 10–25 the composition is skewed to polar residues; sequence RYNQASQPQKTPIKTH. Mg(2+)-binding residues include Thr85, Asp87, Glu100, and Gln119.

This sequence belongs to the RecU family. It depends on Mg(2+) as a cofactor.

It is found in the cytoplasm. It carries out the reaction Endonucleolytic cleavage at a junction such as a reciprocal single-stranded crossover between two homologous DNA duplexes (Holliday junction).. In terms of biological role, endonuclease that resolves Holliday junction intermediates in genetic recombination. Cleaves mobile four-strand junctions by introducing symmetrical nicks in paired strands. Promotes annealing of linear ssDNA with homologous dsDNA. Required for DNA repair, homologous recombination and chromosome segregation. The protein is Holliday junction resolvase RecU of Bacillus cereus (strain B4264).